The following is a 351-amino-acid chain: Peptide chain release factor 1 (351 aa).

The residue at position 230 (glutamine 230) is an N5-methylglutamine.

It belongs to the prokaryotic/mitochondrial release factor family. In terms of processing, methylated by PrmC. Methylation increases the termination efficiency of RF1.

The protein resides in the cytoplasm. In terms of biological role, peptide chain release factor 1 directs the termination of translation in response to the peptide chain termination codons UAG and UAA. This Onion yellows phytoplasma (strain OY-M) protein is Peptide chain release factor 1.